The following is a 343-amino-acid chain: S-adenosylmethionine:tRNA ribosyltransferase-isomerase (343 aa).

The protein belongs to the QueA family. As to quaternary structure, monomer.

The protein resides in the cytoplasm. The enzyme catalyses 7-aminomethyl-7-carbaguanosine(34) in tRNA + S-adenosyl-L-methionine = epoxyqueuosine(34) in tRNA + adenine + L-methionine + 2 H(+). The protein operates within tRNA modification; tRNA-queuosine biosynthesis. Functionally, transfers and isomerizes the ribose moiety from AdoMet to the 7-aminomethyl group of 7-deazaguanine (preQ1-tRNA) to give epoxyqueuosine (oQ-tRNA). This Natranaerobius thermophilus (strain ATCC BAA-1301 / DSM 18059 / JW/NM-WN-LF) protein is S-adenosylmethionine:tRNA ribosyltransferase-isomerase.